The chain runs to 223 residues: N-terminal Xaa-Pro-Lys N-methyltransferase 1 (223 aa).

Met1 bears the N-acetylmethionine mark. An N-acetylthreonine; in N-terminal Xaa-Pro-Lys N-methyltransferase 1, N-terminally processed modification is found at Thr2. Residues Gly69, Arg74, Asp91–Thr93, Leu119–Gln120, and Gln135 each bind S-adenosyl-L-methionine.

This sequence belongs to the methyltransferase superfamily. NTM1 family.

The protein localises to the nucleus. It catalyses the reaction N-terminal L-alanyl-L-prolyl-L-lysyl-[protein] + 3 S-adenosyl-L-methionine = N-terminal N,N,N-trimethyl-L-alanyl-L-prolyl-L-lysyl-[protein] + 3 S-adenosyl-L-homocysteine + 3 H(+). The enzyme catalyses N-terminal L-seryl-L-prolyl-L-lysyl-[protein] + 3 S-adenosyl-L-methionine = N-terminal N,N,N-trimethyl-L-seryl-L-prolyl-L-lysyl-[protein] + 3 S-adenosyl-L-homocysteine + 3 H(+). The catalysed reaction is N-terminal L-prolyl-L-prolyl-L-lysyl-[protein] + 2 S-adenosyl-L-methionine = N-terminal N,N-dimethyl-L-prolyl-L-prolyl-L-lysyl-[protein] + 2 S-adenosyl-L-homocysteine + 2 H(+). Distributive alpha-N-methyltransferase that methylates the N-terminus of target proteins containing the N-terminal motif [Ala/Gly/Pro/Ser]-Pro-Lys when the initiator Met is cleaved. Specifically catalyzes mono-, di- or tri-methylation of the exposed alpha-amino group of the Ala, Gly or Ser residue in the [Ala/Gly/Ser]-Pro-Lys motif and mono- or di-methylation of Pro in the Pro-Pro-Lys motif. Some of the substrates may be primed by NTMT2-mediated monomethylation. Catalyzes the trimethylation of the N-terminal Gly in CENPA (after removal of Met-1). Responsible for the N-terminal methylation of KLHL31, MYL2, MYL3, RB1, RCC1, RPL23A and SET. Required during mitosis for normal bipolar spindle formation and chromosome segregation via its action on RCC1. This is N-terminal Xaa-Pro-Lys N-methyltransferase 1 (NTMT1) from Homo sapiens (Human).